Consider the following 313-residue polypeptide: Ribosomal RNA small subunit methyltransferase H (313 aa).

S-adenosyl-L-methionine is bound by residues 35 to 37 (GGH), aspartate 55, phenylalanine 80, aspartate 102, and glutamine 109.

This sequence belongs to the methyltransferase superfamily. RsmH family.

Its subcellular location is the cytoplasm. The catalysed reaction is cytidine(1402) in 16S rRNA + S-adenosyl-L-methionine = N(4)-methylcytidine(1402) in 16S rRNA + S-adenosyl-L-homocysteine + H(+). Specifically methylates the N4 position of cytidine in position 1402 (C1402) of 16S rRNA. The chain is Ribosomal RNA small subunit methyltransferase H from Shewanella oneidensis (strain ATCC 700550 / JCM 31522 / CIP 106686 / LMG 19005 / NCIMB 14063 / MR-1).